The primary structure comprises 1257 residues: ATP-binding cassette sub-family B member 5 (1257 aa).

The tract at residues methionine 1–proline 24 is disordered. An N-linked (GlcNAc...) asparagine glycan is attached at asparagine 17. Residues isoleucine 49–leucine 69 traverse the membrane as a helical segment. One can recognise an ABC transmembrane type-1 1 domain in the interval isoleucine 49–alanine 350. 2 N-linked (GlcNAc...) asparagine glycosylation sites follow: asparagine 85 and asparagine 91. Transmembrane regions (helical) follow at residues tyrosine 110–isoleucine 130, lysine 181–valine 201, glycine 203–alanine 223, valine 294–leucine 314, and isoleucine 322–alanine 342. Asparagine 371, asparagine 390, and asparagine 423 each carry an N-linked (GlcNAc...) asparagine glycan. The ABC transporter 1 domain maps to valine 386–serine 622. Glycine 421–serine 428 contacts ATP. A run of 2 helical transmembrane segments spans residues valine 693 to phenylalanine 713 and methionine 737 to tyrosine 757. The 288-residue stretch at valine 693–lysine 980 folds into the ABC transmembrane type-1 2 domain. Asparagine 789 and asparagine 819 each carry an N-linked (GlcNAc...) asparagine glycan. The chain crosses the membrane as a helical span at residues valine 827–valine 847. An N-linked (GlcNAc...) asparagine glycan is attached at asparagine 910. 2 helical membrane-spanning segments follow: residues isoleucine 917 to phenylalanine 937 and methionine 954 to leucine 974. The ABC transporter 2 domain maps to leucine 1015–alanine 1253. ATP is bound at residue glycine 1050–serine 1057. Residues asparagine 1104 and asparagine 1188 are each glycosylated (N-linked (GlcNAc...) asparagine).

This sequence belongs to the ABC transporter superfamily. ABCB family. Multidrug resistance exporter (TC 3.A.1.201) subfamily. Expressed by CD133-expressing progenitor cells among epidermal melanocytes (at protein level). Widely expressed with specific expression in pigment cells. Highly expressed in several malignant tissues: highly expressed in clinical melanomas, with low expression in normal skin. In melanoma, marks malignant melanoma-initiating cells (MMIC), in which clinical virulence resides as a consequence of unlimited self-renewal capacity, resulting in inexorable tumor progression and metastasis. Also highly expressed in a number of leukemia cells. Expressed in basal limbal epithelium.

Its subcellular location is the cell membrane. It catalyses the reaction daunorubicin(in) + ATP + H2O = daunorubicin(out) + ADP + phosphate + H(+). Energy-dependent efflux transporter responsible for decreased drug accumulation in multidrug-resistant cells. Specifically present in limbal stem cells, where it plays a key role in corneal development and repair. The sequence is that of ATP-binding cassette sub-family B member 5 from Homo sapiens (Human).